The sequence spans 336 residues: MSSQKRPSEESTGSGTKKVKLEETKTPSLKSEASNLALPKMNDSSNNINAVPLALPKGGDKKKKANSKTAQSGKNGGKEDGTGQKQKATDPNKMQDVLISAGVDLKEEEALLSSTVNVSKTQQNAVVIPPHPPFLHPDQVSNFMKKVAKTQNFNLSFTKNTEILDMMSSACESYLRDIITNTIVVSRHRRKGVKVNYGRRSQVAAALRSIAINQKKEEERRMKKRIALGLEKEDYENKMDSEETLHRASNVTATLRAGSKKQYGWLTSSINKPASIGVKSAGKVATEIAARGESGLKFREAREEPGIVMRDLLFALEHRRIGVHNIISKGYARIRD.

Positions 1–15 are enriched in polar residues; it reads MSSQKRPSEESTGSG. Residues 1–93 form a disordered region; that stretch reads MSSQKRPSEE…QKQKATDPNK (93 aa). The span at 76–90 shows a compositional bias: basic and acidic residues; it reads GGKEDGTGQKQKATD. A Histone-fold domain is found at 141–209; that stretch reads SNFMKKVAKT…RSQVAAALRS (69 aa).

This sequence belongs to the TAF4 family. The 1.2 MDa TFIID complex is composed of TATA binding protein (TBP) and the 14 TBP-associated factors.

The protein localises to the nucleus. Functions as a component of the DNA-binding general transcription factor complex TFIID. Binding of TFIID to a promoter (with or without TATA element) is the initial step in pre-initiation complex (PIC) formation. TFIID plays a key role in the regulation of gene expression by RNA polymerase II through different activities such as transcription activator interaction, core promoter recognition and selectivity, TFIIA and TFIIB interaction, chromatin modification (histone acetylation by TAF1), facilitation of DNA opening and initiation of transcription. This chain is Transcription initiation factor TFIID subunit 4 (TAF4), found in Candida glabrata (strain ATCC 2001 / BCRC 20586 / JCM 3761 / NBRC 0622 / NRRL Y-65 / CBS 138) (Yeast).